We begin with the raw amino-acid sequence, 1410 residues long: Condensin-1 complex subunit CAP-D2 (1410 aa).

Positions 469-480 (LEPTEHASKEST) are enriched in basic and acidic residues. 4 disordered regions span residues 469–492 (LEPT…DGEI), 504–525 (HQDS…EKDV), 860–879 (KTKK…NLEA), and 1208–1410 (KEQE…GSRS). Polar residues predominate over residues 869 to 879 (ESQNTEENLEA). The span at 1208–1226 (KEQEETARNAEVHREKTKT) shows a compositional bias: basic and acidic residues. Acidic residues-rich tracts occupy residues 1240 to 1284 (PVEE…EEPD) and 1306 to 1319 (IETE…DSEP). A compositionally biased stretch (polar residues) spans 1323–1339 (QCGTTNPRSLNRKTSGD). The span at 1342 to 1365 (IETESEEEQSDSEEEPSDSEEEPD) shows a compositional bias: acidic residues. The span at 1368 to 1379 (QCGTTNPRSLNQ) shows a compositional bias: polar residues.

This sequence belongs to the CND1 (condensin subunit 1) family. In terms of assembly, component of the condensin complex. In terms of tissue distribution, present in buds.

It localises to the chromosome. Its subcellular location is the nucleus. Essential protein. Regulatory subunit of the condensin complex, a complex required for conversion of interphase chromatin into mitotic-like condense chromosomes. The condensin complex probably introduces positive supercoils into relaxed DNA in the presence of type I topoisomerases and converts nicked DNA into positive knotted forms in the presence of type II topoisomerases. Required for fertility, growth and euchromatin organization, but not for sister chromatid cohesion. Necessary to maintain normal structural integrity of the meiotic chromosomes during the two nuclear divisions of gametogenesis, especially to maintain compaction of the centromeric repeats and 45S rDNA. Also seems to be involved in crossover formation during meiotic prophase I. Prevents centromeric and pericentromeric heterochromatin repeats association. Contributes to the induction of stress-responsive genes in response to stress treatment. In Arabidopsis thaliana (Mouse-ear cress), this protein is Condensin-1 complex subunit CAP-D2.